A 301-amino-acid chain; its full sequence is Homoserine kinase (301 aa).

Residue 81–91 coordinates ATP; the sequence is RPSSGLGSSAA.

It belongs to the GHMP kinase family. Homoserine kinase subfamily.

The protein localises to the cytoplasm. The enzyme catalyses L-homoserine + ATP = O-phospho-L-homoserine + ADP + H(+). It functions in the pathway amino-acid biosynthesis; L-threonine biosynthesis; L-threonine from L-aspartate: step 4/5. In terms of biological role, catalyzes the ATP-dependent phosphorylation of L-homoserine to L-homoserine phosphate. The sequence is that of Homoserine kinase from Halobacterium salinarum (strain ATCC 29341 / DSM 671 / R1).